Consider the following 422-residue polypeptide: Glutamate-1-semialdehyde 2,1-aminomutase (422 aa).

K264 carries the post-translational modification N6-(pyridoxal phosphate)lysine.

Belongs to the class-III pyridoxal-phosphate-dependent aminotransferase family. HemL subfamily. As to quaternary structure, homodimer. It depends on pyridoxal 5'-phosphate as a cofactor.

Its subcellular location is the cytoplasm. The enzyme catalyses (S)-4-amino-5-oxopentanoate = 5-aminolevulinate. It participates in porphyrin-containing compound metabolism; protoporphyrin-IX biosynthesis; 5-aminolevulinate from L-glutamyl-tRNA(Glu): step 2/2. The protein is Glutamate-1-semialdehyde 2,1-aminomutase of Clostridium tetani (strain Massachusetts / E88).